A 382-amino-acid polypeptide reads, in one-letter code: Pyrimidine monooxygenase RutA (382 aa).

FMN contacts are provided by residues 68–69 (IK), asparagine 134, glutamate 143, 159–160 (RY), and serine 209.

Belongs to the NtaA/SnaA/DszA monooxygenase family. RutA subfamily.

It catalyses the reaction uracil + FMNH2 + NADH + O2 = (Z)-3-ureidoacrylate + FMN + NAD(+) + H2O + H(+). The enzyme catalyses thymine + FMNH2 + NADH + O2 = (Z)-2-methylureidoacrylate + FMN + NAD(+) + H2O + H(+). In terms of biological role, catalyzes the pyrimidine ring opening between N-3 and C-4 by an unusual flavin hydroperoxide-catalyzed mechanism, adding oxygen atoms in the process to yield ureidoacrylate peracid, that immediately reacts with FMN forming ureidoacrylate and FMN-N(5)-oxide. The FMN-N(5)-oxide reacts spontaneously with NADH to produce FMN. Requires the flavin reductase RutF to regenerate FMN in vivo. This Escherichia coli O55:H7 (strain CB9615 / EPEC) protein is Pyrimidine monooxygenase RutA.